The sequence spans 396 residues: Enoyl-[acyl-carrier-protein] reductase [NADH] (396 aa).

NAD(+) is bound by residues 47-52 (GASTGF), 73-74 (FE), 110-111 (DA), and 138-139 (LA). Substrate is bound at residue Tyr-224. Tyr-234 (proton donor) is an active-site residue. Residues Lys-243 and 272–274 (LVT) contribute to the NAD(+) site.

The protein belongs to the TER reductase family. As to quaternary structure, monomer.

The catalysed reaction is a 2,3-saturated acyl-[ACP] + NAD(+) = a (2E)-enoyl-[ACP] + NADH + H(+). Its pathway is lipid metabolism; fatty acid biosynthesis. Its function is as follows. Involved in the final reduction of the elongation cycle of fatty acid synthesis (FAS II). Catalyzes the reduction of a carbon-carbon double bond in an enoyl moiety that is covalently linked to an acyl carrier protein (ACP). In Flavobacterium johnsoniae (strain ATCC 17061 / DSM 2064 / JCM 8514 / BCRC 14874 / CCUG 350202 / NBRC 14942 / NCIMB 11054 / UW101) (Cytophaga johnsonae), this protein is Enoyl-[acyl-carrier-protein] reductase [NADH].